The primary structure comprises 244 residues: MSDYLELLPAVDITEGRAVQLAQGVAGSERTYGDPVAAAMRWQEAGAEWIHLVDLDAAFGRGSNRELQAEIVGALDVQVEMSGGIRDDESLAAALATGCRRVNIGTAALEQPEWCRRVIAEHGDRVAIGLDVRGRTLAARGWTKDGGDLYETLARLDAEGCARYVVTDVNKDGMLQGPNLQLLRDVCAATSAPVVASGGVTTLADIEALMELVPVGVEGAIAGTALYEGRFTLEDALALTRGGR.

The Proton acceptor role is filled by aspartate 12. Residue aspartate 131 is the Proton donor of the active site.

Belongs to the HisA/HisF family.

The protein resides in the cytoplasm. The catalysed reaction is 1-(5-phospho-beta-D-ribosyl)-5-[(5-phospho-beta-D-ribosylamino)methylideneamino]imidazole-4-carboxamide = 5-[(5-phospho-1-deoxy-D-ribulos-1-ylimino)methylamino]-1-(5-phospho-beta-D-ribosyl)imidazole-4-carboxamide. It participates in amino-acid biosynthesis; L-histidine biosynthesis; L-histidine from 5-phospho-alpha-D-ribose 1-diphosphate: step 4/9. In Nocardioides sp. (strain ATCC BAA-499 / JS614), this protein is 1-(5-phosphoribosyl)-5-[(5-phosphoribosylamino)methylideneamino] imidazole-4-carboxamide isomerase.